Consider the following 59-residue polypeptide: SPbeta prophage-derived uncharacterized protein YosB (59 aa).

This chain is SPbeta prophage-derived uncharacterized protein YosB (yosB), found in Bacillus subtilis (strain 168).